The sequence spans 138 residues: Thyrotropin subunit beta (138 aa).

An N-terminal signal peptide occupies residues 1-20 (MTATFLMSMIFGLACGQAMS). 6 disulfide bridges follow: Cys22–Cys72, Cys36–Cys87, Cys39–Cys125, Cys47–Cys103, Cys51–Cys105, and Cys108–Cys115. Asn43 carries N-linked (GlcNAc...) asparagine glycosylation. Positions 133–138 (MVGFSI) are excised as a propeptide.

Belongs to the glycoprotein hormones subunit beta family. Heterodimer of a common alpha chain and a unique beta chain which confers biological specificity to thyrotropin, lutropin, follitropin and gonadotropin.

The protein resides in the secreted. In terms of biological role, indispensable for the control of thyroid structure and metabolism. In Bos taurus (Bovine), this protein is Thyrotropin subunit beta (TSHB).